The primary structure comprises 114 residues: Cytochrome c oxidase assembly protein cox16, mitochondrial (114 aa).

A helical transmembrane segment spans residues 29–49 (PFLLFGLPFMSVIVAGSFILT).

Belongs to the COX16 family.

The protein localises to the mitochondrion inner membrane. Required for the assembly of the mitochondrial respiratory chain complex IV (CIV), also known as cytochrome c oxidase. May participate in merging the COX1 and COX2 assembly lines. This chain is Cytochrome c oxidase assembly protein cox16, mitochondrial (cox-9), found in Neurospora crassa (strain ATCC 24698 / 74-OR23-1A / CBS 708.71 / DSM 1257 / FGSC 987).